Here is a 441-residue protein sequence, read N- to C-terminus: Pre-mRNA-splicing factor PRP46 (441 aa).

Disordered regions lie at residues M1–S22 and M81–L107. Polar residues predominate over residues A83 to L107. WD repeat units lie at residues G130–T169, G172–H211, G214–V253, G256–T295, H298–N336, D339–Q379, and E388–S427.

It belongs to the WD repeat PRL1/PRL2 family. Associated with the spliceosome.

It localises to the cytoplasm. Its subcellular location is the nucleus. In terms of biological role, involved in pre-mRNA splicing and required for cell cycle progression at G2/M. In Yarrowia lipolytica (strain CLIB 122 / E 150) (Yeast), this protein is Pre-mRNA-splicing factor PRP46 (PRP46).